The following is a 467-amino-acid chain: MSSILPFTPPVVKRLLGWKKSAGGSGGAGGGEQNGQEEKWCEKAVKSLVKKLKKTGRLDELEKAITTQNCNTKCVTIPSTCSEIWGLSTPNTIDQWDTTGLYSFSEQTRSLDGRLQVSHRKGLPHVIYCRLWRWPDLHSHHELKAIENCEYAFNLKEDEVCVNPYHYQRVETPVLPPVLVPRHTEILTELPPLDDYTHSIPENTNFPAGIEPQSNYIPETPPPGYISEDGETSDQQLNQSMDTGSPAELSPTTLSPVNHSLDLQPVTYSEPAFWCSIAYYELNQRVGETFHASQPSLTVDGFTDPSNSERFCLGLLSNVNRNATVEMTRRHIGRGVRLYYIGGEVFAECLSDSAIFVQSPNCNQRYGWHPATVCKIPPGCNLKIFNNQEFAALLAQSVNQGFEAVYQLTRMCTIRMSFVKGWGAEYRRQTVTSTPCWIELHLNGPLQWLDKVLTQMGSPSVRCSSMS.

At Ser-2 the chain carries N-acetylserine. Thr-8 carries the phosphothreonine modification. The region spanning 10–176 (PVVKRLLGWK…YQRVETPVLP (167 aa)) is the MH1 domain. An N6-acetyllysine modification is found at Lys-19. Residues Cys-74, Cys-149, Cys-161, and His-166 each contribute to the Zn(2+) site. The segment covering 207–217 (PAGIEPQSNYI) has biased composition (polar residues). The interval 207–251 (PAGIEPQSNYIPETPPPGYISEDGETSDQQLNQSMDTGSPAELSP) is disordered. Thr-220 is modified (phosphothreonine). Residues 221–225 (PPPGY) carry the PY-motif motif. Polar residues predominate over residues 233 to 243 (SDQQLNQSMDT). Ser-240 carries the phosphoserine; by CAMK2 modification. Residues Ser-245, Ser-250, Ser-255, Ser-458, Ser-460, and Ser-464 each carry the phosphoserine modification. In terms of domain architecture, MH2 spans 274–467 (WCSIAYYELN…SPSVRCSSMS (194 aa)). Phosphoserine; by TGFBR1 occurs at positions 465 and 467.

It belongs to the dwarfin/SMAD family. In terms of assembly, monomer; in the absence of TGF-beta. Heterodimer; in the presence of TGF-beta. Forms a heterodimer with co-SMAD, SMAD4, in the nucleus to form the transactivation complex SMAD2/SMAD4. Found in a complex with SMAD3 and TRIM33 upon addition of TGF-beta. Identified in a complex that contains at least ZNF451, SMAD2, SMAD3 and SMAD4. Interacts (via the MH2 domain) with ZFYVE9; may form trimers with the SMAD4 co-SMAD. Interacts with TAZ/WWRT1. Interacts with FOXH1. Interacts with SNW1. Interacts with CREB-binding protein (CBP) and EP300. Interacts with SNON. Interacts with ALK4/ACVR1B. Interacts with SKOR1. Interacts with SKOR2. Interacts with PRDM16. Interacts (via MH2 domain) with LEMD3. Interacts with RBPMS. Interacts with WWP1. Interacts (dephosphorylated form, via the MH1 and MH2 domains) with RANBP3 (via its C-terminal R domain); the interaction results in the export of dephosphorylated SMAD3 out of the nucleus and termination of the TGF-beta signaling. Interacts with PDPK1 (via PH domain). Interacts with DAB2; the interactions are enhanced upon TGF-beta stimulation. Interacts with USP15. Interacts with PPP5C. Interacts with LDLRAD4 (via the SMAD interaction motif). Interacts (via MH2 domain) with PMEPA1 (via the SMAD interaction motif). Interacts with ZFHX3. Interacts with ZNF451. Interacts with SMURF2 when phosphorylated on Ser-465/467. Interacts with PPM1A. Interacts with TGF-beta. Interacts with TGFBR1. Interacts with TGIF. Interacts with SMAD3 and TRIM33. Interacts with ZNF580. Interacts with NEDD4L in response to TGF-beta. Interacts with HGS. Interacts with AIP1. Interacts with WWP1. Interacts with PML. Interacts weakly with ZNF8. Interacts (when phosphorylated) with RNF111; RNF111 acts as an enhancer of the transcriptional responses by mediating ubiquitination and degradation of SMAD2 inhibitors. Interacts with YAP1 (when phosphorylated at 'Ser-55'). Interacts when phosphorylated with IPO7; the interaction facilitates translocation of SMAD2 to the nucleus. Interacts with MTMR4; negatively regulates TGF-beta signaling through SMAD2 dephosphorylation and retention in endosomes. In terms of processing, in response to TGF-beta, phosphorylated on the C-terminal SXS motif by TGF-beta and activin type 1 receptor kinases, phosphorylation declines progressively in a KMT5A-dependent manner. Phosphorylation in this motif is required for interaction with a number of proteins including SMURF2, SNON and SMAD4 in response to TGF-beta. Dephosphorylated in this motif by PPM1A leading to disruption of the SMAD2/3-SMAD4 complex, nuclear export and termination of the TGF-beta signaling. In response to decorin, the naturally occurring inhibitor of TGF-beta signaling, phosphorylated on Ser-240 by CaMK2. Phosphorylated by MAPK3 upon EGF stimulation; which increases transcriptional activity and stability, and is blocked by calmodulin. Phosphorylated by PDPK1. Post-translationally, acetylated on Lys-19 by coactivators in response to TGF-beta signaling, which increases transcriptional activity. In response to TGF-beta, ubiquitinated by NEDD4L; which promotes its degradation. Monoubiquitinated, leading to prevent DNA-binding. Deubiquitination by USP15 alleviates inhibition and promotes activation of TGF-beta target genes. Ubiquitinated by RNF111, leading to its degradation: only SMAD2 proteins that are 'in use' are targeted by RNF111, RNF111 playing a key role in activating SMAD2 and regulating its turnover.

It localises to the cytoplasm. The protein resides in the nucleus. Receptor-regulated SMAD (R-SMAD) that is an intracellular signal transducer and transcriptional modulator activated by TGF-beta (transforming growth factor) and activin type 1 receptor kinases. Binds the TRE element in the promoter region of many genes that are regulated by TGF-beta and, on formation of the SMAD2/SMAD4 complex, activates transcription. Promotes TGFB1-mediated transcription of odontoblastic differentiation genes in dental papilla cells. Positively regulates PDPK1 kinase activity by stimulating its dissociation from the 14-3-3 protein YWHAQ which acts as a negative regulator. This chain is Mothers against decapentaplegic homolog 2 (SMAD2), found in Pongo abelii (Sumatran orangutan).